The chain runs to 145 residues: ATP synthase epsilon chain (145 aa).

It belongs to the ATPase epsilon chain family. In terms of assembly, F-type ATPases have 2 components, CF(1) - the catalytic core - and CF(0) - the membrane proton channel. CF(1) has five subunits: alpha(3), beta(3), gamma(1), delta(1), epsilon(1). CF(0) has three main subunits: a, b and c.

The protein resides in the cell membrane. Functionally, produces ATP from ADP in the presence of a proton gradient across the membrane. In Buchnera aphidicola subsp. Baizongia pistaciae (strain Bp), this protein is ATP synthase epsilon chain.